We begin with the raw amino-acid sequence, 547 residues long: Chaperonin GroEL (547 aa).

Residues 29–32, 86–90, Gly413, and Asp498 contribute to the ATP site; these read TLGP and DGTTT.

Belongs to the chaperonin (HSP60) family. In terms of assembly, forms a cylinder of 14 subunits composed of two heptameric rings stacked back-to-back. Interacts with the co-chaperonin GroES.

Its subcellular location is the cytoplasm. It catalyses the reaction ATP + H2O + a folded polypeptide = ADP + phosphate + an unfolded polypeptide.. Together with its co-chaperonin GroES, plays an essential role in assisting protein folding. The GroEL-GroES system forms a nano-cage that allows encapsulation of the non-native substrate proteins and provides a physical environment optimized to promote and accelerate protein folding. This Herpetosiphon aurantiacus (strain ATCC 23779 / DSM 785 / 114-95) protein is Chaperonin GroEL.